We begin with the raw amino-acid sequence, 344 residues long: MKLKSLVFSLSALFLVLGFTGCKSKAQAKAEQEAQERKAFMAENAKIEKRLMQAKNAATEAEANVYYPEKFAQIEDLEKQSSEAKEQDDLKKANSLGSAAADKYETLANKMKIANQRSKIEANKLAKYDEESYRLGEEAEKKIDGLYKSDSVAALQTSNESLMYYNKVIDAGYKSLSQDAKKTADDAKAALTAVKVAASLKPQQEEADGIYAKAEEAENSAQYEQSYGGYTSAAQAYNDLTQIIKAKRLEAQKAMQAAKTKQELSAKLANEADKESPLPENAEGFSKEPIEVEPLPTDVLNAPQDEKAEETVPVEEMNENSSEEVNGNAEKIESTEEPIEGGVQ.

The first 21 residues, 1-21 (MKLKSLVFSLSALFLVLGFTG), serve as a signal peptide directing secretion. Residue cysteine 22 is the site of N-palmitoyl cysteine attachment. Cysteine 22 carries S-diacylglycerol cysteine lipidation. Positions 257–344 (AAKTKQELSA…TEEPIEGGVQ (88 aa)) are disordered. Residues 260-277 (TKQELSAKLANEADKESP) are compositionally biased toward basic and acidic residues. Composition is skewed to acidic residues over residues 312–322 (VPVEEMNENSS) and 335–344 (TEEPIEGGVQ).

This sequence to T.pallidum TmpA.

It localises to the cell membrane. The sequence is that of Treponemal membrane protein A (tmpA) from Treponema phagedenis.